Reading from the N-terminus, the 465-residue chain is D(1C) dopamine receptor (465 aa).

Residues 1–30 (MENFSIFNVTVNVWHADLDVGNSDLSLRAL) are Extracellular-facing. Residues asparagine 3 and asparagine 8 are each glycosylated (N-linked (GlcNAc...) asparagine). A helical transmembrane segment spans residues 31 to 54 (TGLLLSLLILSTLLGNTLVCLAVI). Topologically, residues 55–65 (KFRHLRSKVTN) are cytoplasmic. The chain crosses the membrane as a helical span at residues 66–92 (FFVISLAVSDLFVALLVMPWKAVTEVA). The Extracellular segment spans residues 93 to 101 (GFWVFGDFC). The cysteines at positions 101 and 187 are disulfide-linked. The chain crosses the membrane as a helical span at residues 102-124 (DTWVAFDIMCSTASILNLCIISL). Residues 125–143 (DRYWAIASPFRYERKMTQR) lie on the Cytoplasmic side of the membrane. Residues 144–168 (VAFIMIGVAWTLSILISFIPVQLSW) traverse the membrane as a helical segment. Over 169–193 (HKSHEADEELNGVNHTENCDSSLNR) the chain is Extracellular. Residues 194-219 (TYAISSSLISFYIPVVIMIGTYTRIY) traverse the membrane as a helical segment. The Cytoplasmic portion of the chain corresponds to 220–264 (RIAQTQIRRISSLERAVEHAQRCSSRLSNENSLKTSFRKETKVLK). The helical transmembrane segment at 265-291 (TLSIIMGVFVFCWLPFFVLNCMIPFCH) threads the bilayer. The Extracellular segment spans residues 292-309 (MNLPGQNEPEPPCVSETT). Residues 310-334 (FNIFVWFGWANSSLNPVIYAFNADF) traverse the membrane as a helical segment. Over 335 to 465 (RKAFTTILGC…EDRHYTTKLY (131 aa)) the chain is Cytoplasmic. A lipid anchor (S-palmitoyl cysteine) is attached at cysteine 344.

It belongs to the G-protein coupled receptor 1 family. In terms of tissue distribution, brain and kidney.

The protein resides in the cell membrane. It is found in the cell projection. The protein localises to the cilium membrane. This is one of the five types (D1 to D5) of receptors for dopamine. The activity of this receptor is mediated by G proteins which activate adenylyl cyclase. This chain is D(1C) dopamine receptor (drd1c), found in Xenopus laevis (African clawed frog).